Consider the following 56-residue polypeptide: MKRQKRDRLERAHSKGYQAGILGHPKDYCPYKTTVESRSQWLGGWREAMEDRAVTA.

Belongs to the ribosome modulation factor family.

It localises to the cytoplasm. Its function is as follows. During stationary phase, converts 70S ribosomes to an inactive dimeric form (100S ribosomes). This chain is Ribosome modulation factor, found in Serratia proteamaculans (strain 568).